The primary structure comprises 327 residues: Thioredoxin reductase (327 aa).

FAD is bound by residues 10 to 13 (SGPA), 39 to 40 (IA), Q44, N53, V86, C143, D286, and 293 to 295 (RQA). A disulfide bridge links C140 with C143.

Belongs to the class-II pyridine nucleotide-disulfide oxidoreductase family. In terms of assembly, homodimer. Requires FAD as cofactor.

It localises to the cytoplasm. The enzyme catalyses [thioredoxin]-dithiol + NADP(+) = [thioredoxin]-disulfide + NADPH + H(+). Component of the thioredoxin-thioredoxin reductase system which may be involved in biosynthesis of penicillins and cephalosporins and may be important in determining the thiol-disulfide redox balance. The chain is Thioredoxin reductase (TRR1) from Pneumocystis jirovecii (Human pneumocystis pneumonia agent).